The following is a 216-amino-acid chain: 2-hydroxy-3-keto-5-methylthiopentenyl-1-phosphate phosphatase (216 aa).

This sequence belongs to the HAD-like hydrolase superfamily. MtnX family.

It carries out the reaction 2-hydroxy-5-methylsulfanyl-3-oxopent-1-enyl phosphate + H2O = 1,2-dihydroxy-5-(methylsulfanyl)pent-1-en-3-one + phosphate. It participates in amino-acid biosynthesis; L-methionine biosynthesis via salvage pathway; L-methionine from S-methyl-5-thio-alpha-D-ribose 1-phosphate: step 4/6. In terms of biological role, dephosphorylates 2-hydroxy-3-keto-5-methylthiopentenyl-1-phosphate (HK-MTPenyl-1-P) yielding 1,2-dihydroxy-3-keto-5-methylthiopentene (DHK-MTPene). This chain is 2-hydroxy-3-keto-5-methylthiopentenyl-1-phosphate phosphatase, found in Exiguobacterium sp. (strain ATCC BAA-1283 / AT1b).